Consider the following 296-residue polypeptide: NAD kinase (296 aa).

The Proton acceptor role is filled by Asp-73. Residues 73 to 74, Lys-78, 151 to 152, Arg-178, Asp-180, and 191 to 196 each bind NAD(+); these read DG, NE, and TAHAMS.

It belongs to the NAD kinase family. It depends on a divalent metal cation as a cofactor.

Its subcellular location is the cytoplasm. It catalyses the reaction NAD(+) + ATP = ADP + NADP(+) + H(+). Involved in the regulation of the intracellular balance of NAD and NADP, and is a key enzyme in the biosynthesis of NADP. Catalyzes specifically the phosphorylation on 2'-hydroxyl of the adenosine moiety of NAD to yield NADP. This chain is NAD kinase, found in Francisella tularensis subsp. novicida (strain U112).